The primary structure comprises 363 residues: Cytoskeleton protein RodZ (363 aa).

The Cytoplasmic segment spans residues 1-111 (MNTEASQDQT…LGKKHKKRDG (111 aa)). The 61-residue stretch at 19 to 79 (LRQARESLGL…KLVHLPEDEL (61 aa)) folds into the HTH cro/C1-type domain. The H-T-H motif DNA-binding region spans 30–49 (QQTVAERLCLKVSTIRDIEE). A helical; Signal-anchor for type II membrane protein transmembrane segment spans residues 112-132 (WLMSFTWLIVLVVLGLTGAWW). Topologically, residues 133 to 363 (WQNHQAQQAE…RVARLTVGVE (231 aa)) are periplasmic. Residues 151–277 (SAQLSQNGGQ…PLPTADAGVS (127 aa)) are disordered. The segment covering 188-199 (PLTNHSVSAITN) has biased composition (polar residues). Over residues 200–225 (SAPTTSSVPTTSSATTSSVPTTSSVP) the composition is skewed to low complexity. Residues 226–243 (KINSTEPVDTANTNTTMH) are compositionally biased toward polar residues. The segment covering 247–259 (AASAAVSPSQVPQ) has biased composition (low complexity).

This sequence belongs to the RodZ family.

The protein localises to the cell inner membrane. Functionally, cytoskeletal protein that is involved in cell-shape control through regulation of the length of the long axis. This Yersinia pseudotuberculosis serotype O:1b (strain IP 31758) protein is Cytoskeleton protein RodZ.